A 257-amino-acid polypeptide reads, in one-letter code: Protein YIPF5 (257 aa).

Residues 1–124 (MSGFENLNTD…KVADGSIMNE (124 aa)) are Cytoplasmic-facing. The interaction with Sec23 stretch occupies residues 75–106 (PASPQPFYGNSFEDEPPLLEELGINFDHIWQK). Residues 125 to 145 (TDLAGPMVFCLAFGATLLLAG) form a helical membrane-spanning segment. Position 146 (Lys-146) is a topological domain, lumenal. Residues 147–167 (IQFGYVYGISAIGCLGMFCLL) form a helical membrane-spanning segment. Residues 168 to 173 (NLMSMT) are Cytoplasmic-facing. Residues 174–194 (GVSFGCVASVLGYCLLPMILL) form a helical membrane-spanning segment. Residues 195-196 (SS) are Lumenal-facing. Residues 197-217 (FAVIFSLQGMVGIILTAGIIG) form a helical membrane-spanning segment. Over 218–236 (WCSFSASKIFISALAMEGQ) the chain is Cytoplasmic. The helical transmembrane segment at 237-257 (QLLVAYPCALLYGVFALISVF) threads the bilayer.

This sequence belongs to the YIP1 family. As to quaternary structure, interacts with the COPII coat components Sec23 (SEC23A and/or SEC23B) and Sec24 (SEC24A and/or SEC24B). Interacts with YIF1A. May interact with RAB1A. Interacts with YIPF3 and YIPF4.

Its subcellular location is the endoplasmic reticulum membrane. It localises to the golgi apparatus. The protein localises to the cis-Golgi network membrane. It is found in the cytoplasmic vesicle. The protein resides in the COPII-coated vesicle. Functionally, plays a role in transport between endoplasmic reticulum and Golgi. In pancreatic beta cells, required to transport proinsulin from endoplasmic reticulum into the Golgi. This Macaca fascicularis (Crab-eating macaque) protein is Protein YIPF5 (YIPF5).